The sequence spans 591 residues: Dihydroxyacetone kinase 2 (591 aa).

The DhaK domain occupies 8 to 344; that stretch reads SDGNIVTPYL…FDYPTTASGW (337 aa). The disordered stretch occupies residues 40–59; it reads ASAPNSGNPPKVSLVSGGGS. Substrate contacts are provided by residues 58 to 61, lysine 109, and aspartate 114; that span reads GSGH. Histidine 223 acts as the Tele-hemiaminal-histidine intermediate in catalysis. The DhaL domain maps to 384-587; the sequence is DTFAKILLAG…LAALLDGFVT (204 aa). Residues 413-416, 459-460, 511-512, and 572-574 each bind ATP; these read DGDC, TS, TL, and DPG.

This sequence belongs to the dihydroxyacetone kinase (DAK) family.

It carries out the reaction dihydroxyacetone + ATP = dihydroxyacetone phosphate + ADP + H(+). The catalysed reaction is D-glyceraldehyde + ATP = D-glyceraldehyde 3-phosphate + ADP + H(+). Its pathway is polyol metabolism; glycerol fermentation; glycerone phosphate from glycerol (oxidative route): step 2/2. Its function is as follows. Catalyzes both the phosphorylation of dihydroxyacetone and of glyceraldehyde. The polypeptide is Dihydroxyacetone kinase 2 (DAK2) (Saccharomyces cerevisiae (strain ATCC 204508 / S288c) (Baker's yeast)).